A 1024-amino-acid polypeptide reads, in one-letter code: Probable serine/threonine-protein kinase DDB_G0271682 (1024 aa).

A disordered region spans residues 187-261 (NIDNNNNNNN…RDNENNHNHQ (75 aa)). Positions 190–244 (NNNNNNNNNNNNNNNNNNNNNNNNNNNNNNNNNNNNNNNNNNNNNNNNNNNNNNN) are enriched in low complexity. Residues 250-261 (RSRDNENNHNHQ) show a composition bias toward basic and acidic residues. Protein kinase domains lie at 360-609 (LLFI…LKLM) and 645-1018 (ILVT…ELLI). Residues 366–374 (IGSGACGEV) and K387 contribute to the ATP site. Residue D484 is the Proton acceptor of the active site. ATP-binding positions include 651–659 (VGGNVSGNV) and K719. Low complexity-rich tracts occupy residues 823–851 (NNNS…NNNN) and 862–874 (ENTN…TTTT). Positions 823 to 874 (NNNSNQNNNNNNNNNNNNNNNNNNNNNNNKKNDGGDDNGENTNTTTTTTTTT) are disordered.

This sequence belongs to the protein kinase superfamily. TKL Ser/Thr protein kinase family.

The catalysed reaction is L-seryl-[protein] + ATP = O-phospho-L-seryl-[protein] + ADP + H(+). It catalyses the reaction L-threonyl-[protein] + ATP = O-phospho-L-threonyl-[protein] + ADP + H(+). In Dictyostelium discoideum (Social amoeba), this protein is Probable serine/threonine-protein kinase DDB_G0271682.